We begin with the raw amino-acid sequence, 417 residues long: Serine/threonine-protein kinase PkaB (417 aa).

One can recognise a Protein kinase domain in the interval 9–270; that stretch reads YTAHQILGRG…ELSARLRELL (262 aa). Residues 15-23 and Lys-36 contribute to the ATP site; that span reads LGRGSAGTV. Residue Asp-130 is the Proton acceptor of the active site. Disordered stretches follow at residues 279–371 and 395–417; these read LDVD…RAAT and LATG…PAAP. Residues 280–293 show a composition bias toward acidic residues; it reads DVDEPDAEQPEDAP. Composition is skewed to low complexity over residues 294–308 and 349–368; these read DASA…STAE and GTAR…ARNR. A compositionally biased stretch (polar residues) spans 408–417; the sequence is DTRNSAPAAP.

Belongs to the protein kinase superfamily. Ser/Thr protein kinase family. Autophosphorylated mainly at Thr.

The enzyme catalyses L-seryl-[protein] + ATP = O-phospho-L-seryl-[protein] + ADP + H(+). The catalysed reaction is L-threonyl-[protein] + ATP = O-phospho-L-threonyl-[protein] + ADP + H(+). The polypeptide is Serine/threonine-protein kinase PkaB (pkaB) (Streptomyces coelicolor (strain ATCC BAA-471 / A3(2) / M145)).